A 345-amino-acid polypeptide reads, in one-letter code: UbiA prenyltransferase domain-containing protein 1 (345 aa).

8 consecutive transmembrane segments (helical) span residues 60–80 (LALRPWSFSASLIPVALGTAI), 90–110 (LLLFVVCAVAVLAVHGAGNLV), 141–161 (VRFGVFLYTLGCLCAACLYFI), 169–189 (LALIYFGGLSSSFLYTGGIGF), 213–233 (AVQVGYLAVTPLLYAVPLALS), 251–273 (QAGIVTLAILVGPMFSYMLYNLL), 285–305 (ATRYTISMALPLLTIPLAFSL), and 324–344 (LNLLVGLFYVFGIVLAPAGSL).

It belongs to the UbiA prenyltransferase family.

The protein resides in the endoplasmic reticulum membrane. It localises to the golgi apparatus membrane. The protein localises to the mitochondrion membrane. The catalysed reaction is menadiol + (2E,6E,10E)-geranylgeranyl diphosphate = menaquinol-4 + diphosphate. It catalyses the reaction all-trans-decaprenyl diphosphate + 4-hydroxybenzoate = 4-hydroxy-3-(all-trans-decaprenyl)benzoate + diphosphate. Its pathway is quinol/quinone metabolism; menaquinone biosynthesis. The protein operates within cofactor biosynthesis; ubiquinone biosynthesis. Its function is as follows. Prenyltransferase that mediates the formation of menaquinone-4 (MK-4) and coenzyme Q10. MK-4 is a vitamin K2 isoform required for endothelial cell development. Mediates the conversion of phylloquinone (PK) into MK-4, probably by cleaving the side chain of phylloquinone (PK) to release 2-methyl-1,4-naphthoquinone (menadione; K3) and then prenylating it with geranylgeranyl pyrophosphate (GGPP) to form MK-4. Also plays a role in cardiovascular development independently of MK-4 biosynthesis, by acting as a coenzyme Q10 biosynthetic enzyme: coenzyme Q10, also named ubiquinone, plays an important antioxidant role in the cardiovascular system. Mediates biosynthesis of coenzyme Q10 in the Golgi membrane, leading to protect cardiovascular tissues from NOS3/eNOS-dependent oxidative stress. In Xenopus tropicalis (Western clawed frog), this protein is UbiA prenyltransferase domain-containing protein 1 (ubiad1).